The primary structure comprises 494 residues: Alpha-amylase-related protein (494 aa).

The first 20 residues, 1–20 (MIKFALALTLCLAGASLSLA), serve as a signal peptide directing secretion. Gln21 carries the post-translational modification Pyrrolidone carboxylic acid. Cys48 and Cys104 are disulfide-bonded. Residues Asn118, Gln169, and Asp178 each contribute to the Ca(2+) site. Cys157 and Cys171 are disulfide-bonded. Arg206 is a binding site for chloride. Asp208 acts as the Nucleophile in catalysis. His212 is a Ca(2+) binding site. Catalysis depends on Glu245, which acts as the Proton donor. 2 residues coordinate chloride: Asn308 and Arg343. Cystine bridges form between Cys376–Cys382, Cys418–Cys441, and Cys448–Cys460.

It belongs to the glycosyl hydrolase 13 family. Monomer. Requires Ca(2+) as cofactor. The cofactor is chloride.

Its subcellular location is the secreted. It catalyses the reaction Endohydrolysis of (1-&gt;4)-alpha-D-glucosidic linkages in polysaccharides containing three or more (1-&gt;4)-alpha-linked D-glucose units.. The chain is Alpha-amylase-related protein (Amyrel) from Drosophila auraria (Fruit fly).